We begin with the raw amino-acid sequence, 296 residues long: Probable ribosomal RNA small subunit methyltransferase A (296 aa).

Residues 1–16 (MTDATSGSDPDSTTPV) show a composition bias toward polar residues. The tract at residues 1 to 25 (MTDATSGSDPDSTTPVDLTGEDFRD) is disordered. 6 residues coordinate S-adenosyl-L-methionine: histidine 44, leucine 46, glycine 72, glutamate 93, aspartate 121, and asparagine 136.

The protein belongs to the class I-like SAM-binding methyltransferase superfamily. rRNA adenine N(6)-methyltransferase family. RsmA subfamily.

Its subcellular location is the cytoplasm. Its function is as follows. Specifically dimethylates two adjacent adenosines in the loop of a conserved hairpin near the 3'-end of 16S rRNA in the 30S particle. May play a critical role in biogenesis of 30S subunits. The protein is Probable ribosomal RNA small subunit methyltransferase A of Haloquadratum walsbyi (strain DSM 16790 / HBSQ001).